A 256-amino-acid polypeptide reads, in one-letter code: Indole-3-glycerol phosphate synthase (256 aa).

Belongs to the TrpC family.

The catalysed reaction is 1-(2-carboxyphenylamino)-1-deoxy-D-ribulose 5-phosphate + H(+) = (1S,2R)-1-C-(indol-3-yl)glycerol 3-phosphate + CO2 + H2O. It participates in amino-acid biosynthesis; L-tryptophan biosynthesis; L-tryptophan from chorismate: step 4/5. The chain is Indole-3-glycerol phosphate synthase from Pelodictyon phaeoclathratiforme (strain DSM 5477 / BU-1).